The chain runs to 92 residues: Small ribosomal subunit protein uS19 (92 aa).

This sequence belongs to the universal ribosomal protein uS19 family.

In terms of biological role, protein S19 forms a complex with S13 that binds strongly to the 16S ribosomal RNA. The sequence is that of Small ribosomal subunit protein uS19 from Yersinia pestis (strain Pestoides F).